Consider the following 732-residue polypeptide: Elongation factor 2 (732 aa).

In terms of domain architecture, tr-type G spans 19 to 260; sequence ERIRNIGIAA…MVVKHLPNPI (242 aa). Residues 28–35, 94–98, and 148–151 each bind GTP; these read AHIDHGKT, DTPGH, and NKVD. Position 597 is a diphthamide (histidine 597).

Belongs to the TRAFAC class translation factor GTPase superfamily. Classic translation factor GTPase family. EF-G/EF-2 subfamily.

The protein resides in the cytoplasm. Functionally, catalyzes the GTP-dependent ribosomal translocation step during translation elongation. During this step, the ribosome changes from the pre-translocational (PRE) to the post-translocational (POST) state as the newly formed A-site-bound peptidyl-tRNA and P-site-bound deacylated tRNA move to the P and E sites, respectively. Catalyzes the coordinated movement of the two tRNA molecules, the mRNA and conformational changes in the ribosome. The protein is Elongation factor 2 (fusA) of Pyrococcus abyssi (strain GE5 / Orsay).